An 812-amino-acid chain; its full sequence is Hyaluronate lyase HylB (812 aa).

A signal peptide (tat-type signal) is located at residues 1–32; sequence MFGTPSRRTFLTASALSAMALAASPTVTDAIA. Catalysis depends on residues Asn222, His272, and Tyr281.

This sequence belongs to the polysaccharide lyase 8 family. In terms of processing, predicted to be exported by the Tat system. The position of the signal peptide cleavage has been experimentally proven.

The protein localises to the secreted. The catalysed reaction is [hyaluronan](n) = n 3-(4-deoxy-beta-D-gluc-4-enuronosyl)-N-acetyl-D-glucosamine + H2O. In terms of biological role, degrades hyaluronic acid (HA) exclusively into HA disaccharides (HA-2). Produced HA-2s confer anti-inflammatory properties leading to reduced immunopathology in the mouse model of acne. This chain is Hyaluronate lyase HylB, found in Cutibacterium acnes (Propionibacterium acnes).